A 160-amino-acid polypeptide reads, in one-letter code: Variant surface antigen C (160 aa).

Residues 1-29 (MKKSIFSKKLLVSFGSLVALASIPLIAIS) form the signal peptide. Cys30 carries N-palmitoyl cysteine lipidation. Cys30 carries S-diacylglycerol cysteine lipidation. Residues 32–160 (QTNTDKSQQP…SSESGSQKTT (129 aa)) are disordered. Composition is skewed to low complexity over residues 38–54 (SQQP…QSGT) and 62–87 (SGTS…QTET). Repeat copies occupy residues 86-97 (ETAPKSPESGSQ), 98-109 (EATPKSPESGSQ), 110-121 (EATPKSPESGSQ), 122-133 (EAAPKSSESGSQ), 134-145 (EAAPKSSESGSQ), and 146-157 (EAAPKSSESGSQ). The 6 X 12 AA tandem repeats stretch occupies residues 86-157 (ETAPKSPESG…APKSSESGSQ (72 aa)). A compositionally biased stretch (polar residues) spans 93-160 (ESGSQEATPK…SSESGSQKTT (68 aa)).

It is found in the cell membrane. In terms of biological role, responsible for the antigenic diversity for host adaptation. The chain is Variant surface antigen C (vlpC) from Mesomycoplasma hyorhinis (Mycoplasma hyorhinis).